Reading from the N-terminus, the 407-residue chain is MSRALLIVLDSVGIGGAPDAASYGDEGADTVGHIAASCARGAGDRAGLRQGPLRLPHLAALGLGLAAEAATGRMPPGLAPAGSVTGAWGHAVETARGKDTVSGHWEIAGVPVDFDWGRFPATEPSFPPELTQALIAEAGLPGILGDCHASGTAIIEELGAEQVRTGKPICYTSVDSVFQIAAHEEAFGLERLSAVCAVARRLCDPYRIGRVIARPFTGDARRGFVRTANRRDFATPPPSDTLLDRLVAAGRPVVSVGKIGDIFAHRSTGSEVKPAGNEACLDAALAAFAESGLGPGGLVFVNLVDFDTEYGHRRDVPGYAAALERFDARIPEIRAGLAPGDLCVITADHGNDPTWSGTDHTREQVPVLSFGPGLRPGPLGRRDTFADIGAALAAHLGLPPSCGRSWL.

Mn(2+) is bound by residues Asp-10, Asp-307, His-312, Asp-348, His-349, and His-360.

It belongs to the phosphopentomutase family. It depends on Mn(2+) as a cofactor.

It is found in the cytoplasm. The enzyme catalyses 2-deoxy-alpha-D-ribose 1-phosphate = 2-deoxy-D-ribose 5-phosphate. It catalyses the reaction alpha-D-ribose 1-phosphate = D-ribose 5-phosphate. Its pathway is carbohydrate degradation; 2-deoxy-D-ribose 1-phosphate degradation; D-glyceraldehyde 3-phosphate and acetaldehyde from 2-deoxy-alpha-D-ribose 1-phosphate: step 1/2. Functionally, isomerase that catalyzes the conversion of deoxy-ribose 1-phosphate (dRib-1-P) and ribose 1-phosphate (Rib-1-P) to deoxy-ribose 5-phosphate (dRib-5-P) and ribose 5-phosphate (Rib-5-P), respectively. This is Phosphopentomutase from Methylobacterium nodulans (strain LMG 21967 / CNCM I-2342 / ORS 2060).